Here is a 132-residue protein sequence, read N- to C-terminus: Outer membrane protein assembly factor BamE (132 aa).

The first 16 residues, 1 to 16 (MQKLVLTLLVTSLLAG), serve as a signal peptide directing secretion. Residue Cys-17 is the site of N-palmitoyl cysteine attachment. Cys-17 is lipidated: S-diacylglycerol cysteine.

This sequence belongs to the BamE family. In terms of assembly, part of the Bam complex.

Its subcellular location is the cell outer membrane. Its function is as follows. Part of the outer membrane protein assembly complex, which is involved in assembly and insertion of beta-barrel proteins into the outer membrane. In Acinetobacter pittii (strain PHEA-2), this protein is Outer membrane protein assembly factor BamE.